Reading from the N-terminus, the 403-residue chain is Arginine biosynthesis bifunctional protein ArgJ (403 aa).

Positions 1 to 11 (MVQSVLSSTSH) are enriched in polar residues. The interval 1 to 21 (MVQSVLSSTSHGSERADMSAA) is disordered. 6 residues coordinate substrate: T161, K183, T194, E273, N398, and T403. Catalysis depends on T194, which acts as the Nucleophile.

It belongs to the ArgJ family. In terms of assembly, heterotetramer of two alpha and two beta chains.

Its subcellular location is the cytoplasm. It carries out the reaction N(2)-acetyl-L-ornithine + L-glutamate = N-acetyl-L-glutamate + L-ornithine. It catalyses the reaction L-glutamate + acetyl-CoA = N-acetyl-L-glutamate + CoA + H(+). The protein operates within amino-acid biosynthesis; L-arginine biosynthesis; L-ornithine and N-acetyl-L-glutamate from L-glutamate and N(2)-acetyl-L-ornithine (cyclic): step 1/1. It functions in the pathway amino-acid biosynthesis; L-arginine biosynthesis; N(2)-acetyl-L-ornithine from L-glutamate: step 1/4. Its function is as follows. Catalyzes two activities which are involved in the cyclic version of arginine biosynthesis: the synthesis of N-acetylglutamate from glutamate and acetyl-CoA as the acetyl donor, and of ornithine by transacetylation between N(2)-acetylornithine and glutamate. The protein is Arginine biosynthesis bifunctional protein ArgJ of Rhodococcoides fascians (Rhodococcus fascians).